The primary structure comprises 822 residues: MARGKRSTQRDADLELESLQSEIESESPQPVTKSKAKKNKKKLNKASAFNSDNDSNYDLKPEDDEVDEEVVPVKKKPSKKSKKAKANAFEAFADEQSVEEEEEEDSEKPVRKNKKSSKKASPKNAFDALADDMDDLSLDEEESESSEKSKKKKKKSKSKDDGSEALDDGDIESSEKDKKKKKKSKENDDAPKKDRKTRKKEEKARKLASMLESENKDNDANAAPLNKTDAFKDGLPSGRLIFAYASGQKVAPDGSNPADGITVTGNLLSPPNSRDLQVEKLSVSAWGKLLIKDSELNLINGRRYGLIAPNGSGKSTLLHAIACGLIPTPSSLDFYLLDREYIPNELTCVEAVLDINEQERKHLEAMMEDLLDDPDKNAVELDTIQTRLTDLETENSDHRVYKILRGLQFTDEMIAKRTNELSGGWRMRIALARILFIKPTLMMLDEPTNHLDLEAVAWLEEYLTHEMEGHTLLITCHTQDTLNEVCTDIIHLYHQKLDYYSGNYDTFLKVRAERDVQLAKKARQQEKDMAKLQNKLNMTGSEQQKKAKAKVKAMNKKLEKDKQSGKVLDEEIIQEKQLVIRFEDCGGGIPSPAIKFQDVSFNYPGGPTIFSKLNFGLDLKSRVALVGPNGAGKTTLIKLILEKVQPSTGSVVRHHGLRLALFNQHMGDQLDMRLSAVEWLRTKFGNKPEGEMRRIVGRYGLTGKSQVIPMGQLSDGQRRRVLFAFLGMTQPHILLLDEPTNALDIDTIDALADALNNFDGGVVFITHDFRLIDQVAEEIWIVQNGTVKEFDGEIRDYKMMLKQQIAKEREEERRIELEKQKK.

The disordered stretch occupies residues 1–230 (MARGKRSTQR…NAAPLNKTDA (230 aa)). Position 27 is a phosphoserine (Ser27). The span at 34–44 (SKAKKNKKKLN) shows a compositional bias: basic residues. A phosphoserine mark is found at Ser47, Ser51, and Ser55. Phosphotyrosine is present on Tyr57. The segment covering 61-70 (PEDDEVDEEV) has biased composition (acidic residues). Basic residues predominate over residues 73–85 (VKKKPSKKSKKAK). Residues 92–106 (FADEQSVEEEEEEDS) show a composition bias toward acidic residues. Ser97 bears the Phosphoserine mark. Over residues 111–121 (RKNKKSSKKAS) the composition is skewed to basic residues. Composition is skewed to acidic residues over residues 129-144 (LADDMDDLSLDEEESE) and 163-172 (SEALDDGDIE). 2 positions are modified to phosphoserine: Ser137 and Ser163. ABC transporter domains are found at residues 276–519 (LQVE…VQLA) and 594–809 (IKFQ…AKER). Residues 308 to 315 (APNGSGKS) and 627 to 634 (GPNGAGKT) each bind ATP.

This sequence belongs to the ABC transporter superfamily.

It localises to the cytoplasm. This is an uncharacterized protein from Schizosaccharomyces pombe (strain 972 / ATCC 24843) (Fission yeast).